Consider the following 496-residue polypeptide: Anaerobic nitric oxide reductase flavorubredoxin (496 aa).

A zinc metallo-hydrolase region spans residues 30–210 (TKGTSYNSYL…PFSALVTAKI (181 aa)). Fe cation is bound by residues H79, E81, D83, H147, D166, and H227. One can recognise a Flavodoxin-like domain in the interval 254–393 (ITIFYDSMSN…LCREHGQFIA (140 aa)). FMN contacts are provided by residues 260 to 264 (SMSNN) and 342 to 369 (AFGS…ETAV). A Rubredoxin-like domain is found at 444 to 495 (KQCMLCSVCNWVYDPEIGEPNQGVEPNTPWSSVPNDFLCPECHLGKDVFVEI). Positions 449, 452, 482, and 485 each coordinate Fe cation.

This sequence in the N-terminal section; belongs to the zinc metallo-hydrolase group 3 family. Homotetramer. Requires Fe cation as cofactor. FMN serves as cofactor.

Its subcellular location is the cytoplasm. Its pathway is nitrogen metabolism; nitric oxide reduction. In terms of biological role, anaerobic nitric oxide reductase; uses NADH to detoxify nitric oxide (NO), protecting several 4Fe-4S NO-sensitive enzymes. Has at least 2 reductase partners, only one of which (NorW, flavorubredoxin reductase) has been identified. NO probably binds to the di-iron center; electrons enter from the NorW at rubredoxin and are transferred sequentially to the FMN center and the di-iron center. Also able to function as an aerobic oxygen reductase. In Aliivibrio fischeri (strain ATCC 700601 / ES114) (Vibrio fischeri), this protein is Anaerobic nitric oxide reductase flavorubredoxin.